A 241-amino-acid polypeptide reads, in one-letter code: Fatty acid metabolism regulator protein (241 aa).

In terms of domain architecture, HTH gntR-type spans glutamine 11 to isoleucine 79. Positions glutamate 39–glutamine 58 form a DNA-binding region, H-T-H motif.

In terms of assembly, homodimer.

The protein resides in the cytoplasm. Its function is as follows. Multifunctional regulator of fatty acid metabolism. The chain is Fatty acid metabolism regulator protein from Haemophilus influenzae (strain ATCC 51907 / DSM 11121 / KW20 / Rd).